The following is a 297-amino-acid chain: Ribosomal RNA small subunit methyltransferase H (297 aa).

Residues glycine 37–histidine 39, glutamate 56, phenylalanine 87, aspartate 102, and histidine 109 contribute to the S-adenosyl-L-methionine site.

This sequence belongs to the methyltransferase superfamily. RsmH family.

Its subcellular location is the cytoplasm. The enzyme catalyses cytidine(1402) in 16S rRNA + S-adenosyl-L-methionine = N(4)-methylcytidine(1402) in 16S rRNA + S-adenosyl-L-homocysteine + H(+). Its function is as follows. Specifically methylates the N4 position of cytidine in position 1402 (C1402) of 16S rRNA. The sequence is that of Ribosomal RNA small subunit methyltransferase H from Borrelia duttonii (strain Ly).